A 487-amino-acid polypeptide reads, in one-letter code: MDDSTDDDSYHPRKHYAYDRQVSSSRWRTSREYIRGPGPETHTTESAQDGQDPPAGVYSYGYFSGSGNDPQVQGHFVPEIQKYNPYVIFKGEQLPVPIWELPEEKVQDFHDRYFIAKDKSRVEARKTLNRLLEGNINTIERGHGYKFNIPKYTDNMEFNEEVKVSLAKAGKTISRSFCNANQREVASRTGYTIDLIERTLGAGLNISKRTVLYTNKDLFGDQSKSDQAINDICALTNIRRGSLGIIAAEKGIVVGNIFLELTNGKSISCSIGVQIPHRLDQIKDVCVEIGSRNIEYILVVEKHTMLNYLLEMDYHTNNNCIILTGCGMPTLQTRDFLRFLKQRTGLPVFGLCDPDPEGISILATYARGSCNSAYDNFNISVPSICWVGLSSSDMIKLNLSETNYSRLSREDKTMLKNLWQDDLSDVWKRRIEEMISFDKKASFEAIHSLGFDYFATNLLPDMINKVREGYVQVQEKKEPQDTEASED.

The disordered stretch occupies residues 1 to 56; it reads MDDSTDDDSYHPRKHYAYDRQVSSSRWRTSREYIRGPGPETHTTESAQDGQDPPAG. In terms of domain architecture, Topo IIA-type catalytic spans 119 to 252; sequence KSRVEARKTL…LGIIAAEKGI (134 aa). Tyr-213 (O-(5'-phospho-DNA)-tyrosine intermediate) is an active-site residue. Mg(2+) contacts are provided by Glu-301 and Asp-353.

It belongs to the TOP6A family. As to quaternary structure, homodimer. Interacts with TOP6B. It depends on Mg(2+) as a cofactor.

Its subcellular location is the nucleus. The catalysed reaction is ATP-dependent breakage, passage and rejoining of double-stranded DNA.. Functionally, required for meiotic recombination. Mediates DNA cleavage that forms the double-strand breaks (DSB) that initiate meiotic recombination. Possesses double-stranded DNA cleavage activity in vitro. This chain is Meiotic recombination protein SPO11-4 (SPO11-4), found in Oryza sativa subsp. japonica (Rice).